Reading from the N-terminus, the 438-residue chain is DNA primase DnaG (438 aa).

The 75-residue stretch at 169-243 (DSIIVVEGRA…DIDYVARAPY (75 aa)) folds into the Toprim domain. Mg(2+)-binding residues include E175, D217, and D219.

Belongs to the archaeal DnaG primase family. Forms a ternary complex with MCM helicase and DNA. It depends on Mg(2+) as a cofactor.

It catalyses the reaction ssDNA + n NTP = ssDNA/pppN(pN)n-1 hybrid + (n-1) diphosphate.. Its function is as follows. RNA polymerase that catalyzes the synthesis of short RNA molecules used as primers for DNA polymerase during DNA replication. The chain is DNA primase DnaG from Methanococcus maripaludis (strain C6 / ATCC BAA-1332).